The following is a 246-amino-acid chain: 3-deoxy-manno-octulosonate cytidylyltransferase (246 aa).

It belongs to the KdsB family.

The protein localises to the cytoplasm. The catalysed reaction is 3-deoxy-alpha-D-manno-oct-2-ulosonate + CTP = CMP-3-deoxy-beta-D-manno-octulosonate + diphosphate. The protein operates within nucleotide-sugar biosynthesis; CMP-3-deoxy-D-manno-octulosonate biosynthesis; CMP-3-deoxy-D-manno-octulosonate from 3-deoxy-D-manno-octulosonate and CTP: step 1/1. It functions in the pathway bacterial outer membrane biogenesis; lipopolysaccharide biosynthesis. Activates KDO (a required 8-carbon sugar) for incorporation into bacterial lipopolysaccharide in Gram-negative bacteria. This chain is 3-deoxy-manno-octulosonate cytidylyltransferase, found in Rickettsia africae (strain ESF-5).